The sequence spans 133 residues: Holo-[acyl-carrier-protein] synthase (133 aa).

Positions 8 and 58 each coordinate Mg(2+).

Belongs to the P-Pant transferase superfamily. AcpS family. The cofactor is Mg(2+).

The protein localises to the cytoplasm. It carries out the reaction apo-[ACP] + CoA = holo-[ACP] + adenosine 3',5'-bisphosphate + H(+). Functionally, transfers the 4'-phosphopantetheine moiety from coenzyme A to a Ser of acyl-carrier-protein. The polypeptide is Holo-[acyl-carrier-protein] synthase (Erythrobacter litoralis (strain HTCC2594)).